The sequence spans 153 residues: MGKISSLPTQLFKCCFCDFLKVKMHIMSSSHLLYLALCLLTFTSSATAGPETLCGAELVDALQFVCGDRGFYFNKPTGYGSSSRRAPQTGIVDECCFRSCDLRRLEMYCAPLKPAKSARSVRAQRHTDMPKAQKEVHLKNASRGSAGNKNYRM.

The b stretch occupies residues 49–77 (GPETLCGAELVDALQFVCGDRGFYFNKPT). 3 disulfides stabilise this stretch: Cys54–Cys96, Cys66–Cys109, and Cys95–Cys100. Positions 78–89 (GYGSSSRRAPQT) are c. The a stretch occupies residues 90–110 (GIVDECCFRSCDLRRLEMYCA). The tract at residues 111–118 (PLKPAKSA) is d. The propeptide at 119–153 (RSVRAQRHTDMPKAQKEVHLKNASRGSAGNKNYRM) is e peptide. Residues 120-153 (SVRAQRHTDMPKAQKEVHLKNASRGSAGNKNYRM) form a disordered region. Over residues 125-138 (RHTDMPKAQKEVHL) the composition is skewed to basic and acidic residues. Residues 142–153 (SRGSAGNKNYRM) show a composition bias toward polar residues.

It belongs to the insulin family. In terms of assembly, forms a ternary complex with IGFR1 and ITGAV:ITGB3. Forms a ternary complex with IGFR1 and ITGA6:ITGB4. Forms a ternary complex with IGFBP3 and ALS.

Its subcellular location is the secreted. Functionally, the insulin-like growth factors, isolated from plasma, are structurally and functionally related to insulin but have a much higher growth-promoting activity. May be a physiological regulator of [1-14C]-2-deoxy-D-glucose (2DG) transport and glycogen synthesis in osteoblasts. Stimulates glucose transport in bone-derived osteoblastic (PyMS) cells and is effective at much lower concentrations than insulin, not only regarding glycogen and DNA synthesis but also with regard to enhancing glucose uptake. May play a role in synapse maturation. Ca(2+)-dependent exocytosis of IGF1 is required for sensory perception of smell in the olfactory bulb. Acts as a ligand for IGF1R. Binds to the alpha subunit of IGF1R, leading to the activation of the intrinsic tyrosine kinase activity which autophosphorylates tyrosine residues in the beta subunit thus initiating a cascade of down-stream signaling events leading to activation of the PI3K-AKT/PKB and the Ras-MAPK pathways. Binds to integrins ITGAV:ITGB3 and ITGA6:ITGB4. Its binding to integrins and subsequent ternary complex formation with integrins and IGFR1 are essential for IGF1 signaling. Induces the phosphorylation and activation of IGFR1, MAPK3/ERK1, MAPK1/ERK2 and AKT1. As part of the MAPK/ERK signaling pathway, acts as a negative regulator of apoptosis in cardiomyocytes via promotion of STUB1/CHIP-mediated ubiquitination and degradation of ICER-type isoforms of CREM. This is Insulin-like growth factor 1 from Rhinopithecus roxellana (Golden snub-nosed monkey).